The primary structure comprises 183 residues: ATP-dependent protease subunit HslV (183 aa).

Residue Thr-13 is part of the active site. Na(+)-binding residues include Gly-168, Cys-171, and Thr-174.

This sequence belongs to the peptidase T1B family. HslV subfamily. A double ring-shaped homohexamer of HslV is capped on each side by a ring-shaped HslU homohexamer. The assembly of the HslU/HslV complex is dependent on binding of ATP.

It localises to the cytoplasm. The enzyme catalyses ATP-dependent cleavage of peptide bonds with broad specificity.. Allosterically activated by HslU binding. Protease subunit of a proteasome-like degradation complex believed to be a general protein degrading machinery. The sequence is that of ATP-dependent protease subunit HslV from Xanthomonas euvesicatoria pv. vesicatoria (strain 85-10) (Xanthomonas campestris pv. vesicatoria).